The sequence spans 143 residues: MSDEIARLVADVFELAGLLRRSGEVVAAREGHTQARWQLLSVVSDRALTVPQAARRLGVTRQGVQRVANDLVVCGLAELRHNPDHRTSPLLVLTENGRRVLQAITERAIVVNNRLADAVDPAALQATRDSLRRMIVALKAERP.

A signal peptide spans 1–27 (MSDEIARLVADVFELAGLLRRSGEVVA).

This is an uncharacterized protein from Mycobacterium tuberculosis (strain CDC 1551 / Oshkosh).